We begin with the raw amino-acid sequence, 309 residues long: uncharacterized protein (309 aa).

The S4 RNA-binding domain maps to 11–87 (QRLDTFLATL…FPLDILYEDE (77 aa)). D131 is a catalytic residue.

It belongs to the pseudouridine synthase RluA family.

It carries out the reaction a uridine in RNA = a pseudouridine in RNA. This is an uncharacterized protein from Mycoplasma pneumoniae (strain ATCC 29342 / M129 / Subtype 1) (Mycoplasmoides pneumoniae).